Consider the following 245-residue polypeptide: Glutathione S-transferase F4 (245 aa).

Positions 25–106 constitute a GST N-terminal domain; sequence AGYKVHGDPF…YIAYVHSSRG (82 aa). Glutathione is bound by residues 35–36, 64–65, 77–78, and 90–91; these read ST, HK, QV, and ES. The GST C-terminal domain maps to 114-244; that stretch reads SHETMATLTM…QEKSWFNKPR (131 aa).

The protein belongs to the GST superfamily. Phi family.

The protein localises to the cytoplasm. Its subcellular location is the cytosol. It catalyses the reaction RX + glutathione = an S-substituted glutathione + a halide anion + H(+). In terms of biological role, may be involved in the conjugation of reduced glutathione to a wide number of exogenous and endogenous hydrophobic electrophiles and have a detoxification role against certain herbicides. The protein is Glutathione S-transferase F4 (GSTF4) of Arabidopsis thaliana (Mouse-ear cress).